The primary structure comprises 675 residues: UvrABC system protein B (675 aa).

Residues 35–192 (QGMRDGLMYQ…ARLVAMQYTR (158 aa)) form the Helicase ATP-binding domain. 48–55 (GVTGSGKT) contacts ATP. A Beta-hairpin motif is present at residues 101–124 (YYDYYQPEAYVPTRDLFIEKDSSI). In terms of domain architecture, Helicase C-terminal spans 439–605 (QVDDLLGEIK…GVNKAVRELI (167 aa)). A UVR domain is found at 633–668 (AREIRRLEKLMTDHARNLEFEQAAAARDALNALKQR).

The protein belongs to the UvrB family. As to quaternary structure, forms a heterotetramer with UvrA during the search for lesions. Interacts with UvrC in an incision complex.

The protein resides in the cytoplasm. Functionally, the UvrABC repair system catalyzes the recognition and processing of DNA lesions. A damage recognition complex composed of 2 UvrA and 2 UvrB subunits scans DNA for abnormalities. Upon binding of the UvrA(2)B(2) complex to a putative damaged site, the DNA wraps around one UvrB monomer. DNA wrap is dependent on ATP binding by UvrB and probably causes local melting of the DNA helix, facilitating insertion of UvrB beta-hairpin between the DNA strands. Then UvrB probes one DNA strand for the presence of a lesion. If a lesion is found the UvrA subunits dissociate and the UvrB-DNA preincision complex is formed. This complex is subsequently bound by UvrC and the second UvrB is released. If no lesion is found, the DNA wraps around the other UvrB subunit that will check the other stand for damage. The protein is UvrABC system protein B of Bordetella petrii (strain ATCC BAA-461 / DSM 12804 / CCUG 43448).